The primary structure comprises 466 residues: MSITSVASVFKGDFAIGSQITVRGWVRSRRDSKAGISFLAVYDGSCFDPIQGVVPNNLENYTNEVLKLTAGCSVVMTGEVVESPGKGQAFEMQVTKLEVVGFVEDPDTYPMAAKRHSIEYLRELAHLRPRTNIIGAVARVRNCLSQAIHRFYNEQGYIWVSTPLITASDTEGAGEMFRVSTLDLENLPRTDKGTVDYSEDFFGKESFLTVSGQLNAETYACALSKVYTFGPTFRAENSNTSRHLAEFWMVEPEVAFANLDDAAKLAEDMLKYCFKAVLEERRDDLEFFAQRVEKTAIERLEAFVSSDFAQIDYTDAIEILKACDKDFEYDVEWGIDLHSEHERYLAEEHFKAPVVVKNYPKDIKAFYMRLNDDGKTVAAMDVLAPGIGEIIGGAQREERLDVLDARLAEMELSQEDYWWYRDLRRYGTVPHAGFGLGFERLVSYVTGVSNIRDVIPFPRSPKSANF.

This sequence belongs to the class-II aminoacyl-tRNA synthetase family. In terms of assembly, homodimer.

It is found in the cytoplasm. The catalysed reaction is tRNA(Asn) + L-asparagine + ATP = L-asparaginyl-tRNA(Asn) + AMP + diphosphate + H(+). This Shewanella halifaxensis (strain HAW-EB4) protein is Asparagine--tRNA ligase.